Reading from the N-terminus, the 1383-residue chain is DNA-directed RNA polymerase subunit beta'' (1383 aa).

The Zn(2+) site is built by Cys220, Cys289, Cys296, and Cys299.

It belongs to the RNA polymerase beta' chain family. RpoC2 subfamily. As to quaternary structure, in plastids the minimal PEP RNA polymerase catalytic core is composed of four subunits: alpha, beta, beta', and beta''. When a (nuclear-encoded) sigma factor is associated with the core the holoenzyme is formed, which can initiate transcription. The cofactor is Zn(2+).

It localises to the plastid. The protein resides in the chloroplast. The enzyme catalyses RNA(n) + a ribonucleoside 5'-triphosphate = RNA(n+1) + diphosphate. Its function is as follows. DNA-dependent RNA polymerase catalyzes the transcription of DNA into RNA using the four ribonucleoside triphosphates as substrates. The chain is DNA-directed RNA polymerase subunit beta'' from Oenothera elata subsp. hookeri (Hooker's evening primrose).